The chain runs to 141 residues: Acetyltransferase YpeA (141 aa).

Residues 1–141 (MEIRVFRQED…GKRLIEDEEY (141 aa)) enclose the N-acetyltransferase domain.

Belongs to the acetyltransferase family. YpeA subfamily.

The chain is Acetyltransferase YpeA (ypeA) from Escherichia coli (strain K12).